The chain runs to 372 residues: Cobalt-precorrin-5B C(1)-methyltransferase (372 aa).

It belongs to the CbiD family.

The enzyme catalyses Co-precorrin-5B + S-adenosyl-L-methionine = Co-precorrin-6A + S-adenosyl-L-homocysteine. It functions in the pathway cofactor biosynthesis; adenosylcobalamin biosynthesis; cob(II)yrinate a,c-diamide from sirohydrochlorin (anaerobic route): step 6/10. In terms of biological role, catalyzes the methylation of C-1 in cobalt-precorrin-5B to form cobalt-precorrin-6A. The polypeptide is Cobalt-precorrin-5B C(1)-methyltransferase (Geobacillus kaustophilus (strain HTA426)).